The chain runs to 314 residues: uncharacterized protein (314 aa).

The disordered stretch occupies residues 1 to 70; that stretch reads MAGNSQRRGA…QGRHKKTDDT (70 aa). Residues 43-65 are compositionally biased toward basic residues; sequence QRPHHPAGKRAAKAARQAQGRHK. Residues Gly265, Ile285, and Leu294 each coordinate S-adenosyl-L-methionine.

Belongs to the class IV-like SAM-binding methyltransferase superfamily. RNA methyltransferase TrmH family.

This is an uncharacterized protein from Mycolicibacterium vanbaalenii (strain DSM 7251 / JCM 13017 / BCRC 16820 / KCTC 9966 / NRRL B-24157 / PYR-1) (Mycobacterium vanbaalenii).